Consider the following 256-residue polypeptide: Triosephosphate isomerase (256 aa).

9–11 (NWK) contacts substrate. His97 (electrophile) is an active-site residue. The active-site Proton acceptor is Glu169. Residues Gly175, Ser214, and 235-236 (GG) each bind substrate.

This sequence belongs to the triosephosphate isomerase family. In terms of assembly, homodimer.

The protein resides in the cytoplasm. It catalyses the reaction D-glyceraldehyde 3-phosphate = dihydroxyacetone phosphate. The protein operates within carbohydrate biosynthesis; gluconeogenesis. It functions in the pathway carbohydrate degradation; glycolysis; D-glyceraldehyde 3-phosphate from glycerone phosphate: step 1/1. In terms of biological role, involved in the gluconeogenesis. Catalyzes stereospecifically the conversion of dihydroxyacetone phosphate (DHAP) to D-glyceraldehyde-3-phosphate (G3P). The protein is Triosephosphate isomerase of Moritella marina (Vibrio marinus).